Reading from the N-terminus, the 663-residue chain is Pyoverdine export ATP-binding/permease protein PvdT (663 aa).

Positions 11 to 250 (IELRDIRKRY…PSAGVERHLQ (240 aa)) constitute an ABC transporter domain. 48-55 (GASGSGKS) contacts ATP. The next 4 membrane-spanning stretches (helical) occupy residues 292–312 (ALTL…LAVG), 545–565 (IAAI…LMTV), 598–618 (VVGG…LLLG), and 626–646 (LSAI…FGFM).

This sequence belongs to the ABC transporter superfamily. Macrolide exporter (TC 3.A.1.122) family. Part of the tripartite efflux system PvdRT-OpmQ, which is composed of an inner membrane component with both ATPase and permease domains, PvdT, a periplasmic membrane fusion protein, PvdR, and an outer membrane component, OpmQ.

Its subcellular location is the cell inner membrane. Part of the tripartite efflux system PvdRT-OpmQ required for the secretion into the extracellular milieu of the siderophore pyoverdine (PVD), which is involved in iron acquisition. This subunit binds PVD and drives its secretion by hydrolyzing ATP. The system is responsible for export of newly synthesized PVD after the final steps of biosynthesis have taken place in the periplasm. It is also responsible for recycling of PVD after internalization of ferri-PVD into the periplasm by the outer-membrane receptor FpvA and release of iron from PVD, thus making PVD available for new cycles of iron uptake. In addition, can expel unwanted metals complexed with PVD from the periplasm into the extracellular medium. The chain is Pyoverdine export ATP-binding/permease protein PvdT from Pseudomonas aeruginosa (strain ATCC 15692 / DSM 22644 / CIP 104116 / JCM 14847 / LMG 12228 / 1C / PRS 101 / PAO1).